A 295-amino-acid polypeptide reads, in one-letter code: Small ribosomal subunit protein uS2 (295 aa).

The residue at position 2 (Ser2) is an N-acetylserine. Phosphoserine is present on Ser43. An N6-acetyllysine modification is found at Lys52. The segment at 54 to 113 is interaction with PPP1R16B; it reads TWEKLLLAARAIVAIENPADVSVISSRNTGQRAVLKFAAATGATPIAGRFTPGTFTNQIQ. Lys89 bears the N6-acetyllysine; alternate mark. Lys89 is covalently cross-linked (Glycyl lysine isopeptide (Lys-Gly) (interchain with G-Cter in SUMO2); alternate). Thr97 carries the phosphothreonine modification. Laminin-binding regions lie at residues 161–180 and 205–229; these read IPCN…MLAR and RDPE…EFQG. 5 [DE]-W-[ST] repeats span residues 230 to 232, 247 to 249, 266 to 268, 275 to 277, and 293 to 295; these read EWT, DWS, and EWS. Residues 242 to 295 form a laminin-binding region; it reads QPEVADWSEGVQVPSVPIQQFPTEDWSAQPTTEDWSAAPTAQATEWVGTTTEWS. The disordered stretch occupies residues 266–295; sequence DWSAQPTTEDWSAAPTAQATEWVGTTTEWS.

Belongs to the universal ribosomal protein uS2 family. As to quaternary structure, monomer (37LRP) and homodimer (67LR). Component of the small ribosomal subunit. Mature ribosomes consist of a small (40S) and a large (60S) subunit. The 40S subunit contains about 33 different proteins and 1 molecule of RNA (18S). The 60S subunit contains about 49 different proteins and 3 molecules of RNA (28S, 5.8S and 5S). Interacts with RPS21. Interacts with several laminins including at least LAMB1. Interacts with MDK. The mature dimeric form interacts with PPP1R16B (via its fourth ankyrin repeat). Interacts with PPP1CA only in the presence of PPP1R16B. Post-translationally, acylated. Acylation may be a prerequisite for conversion of the monomeric 37 kDa laminin receptor precursor (37LRP) to the mature dimeric 67 kDa laminin receptor (67LR), and may provide a mechanism for membrane association. In terms of processing, cleaved by stromelysin-3 (ST3) at the cell surface. Cleavage by stromelysin-3 may be a mechanism to alter cell-extracellular matrix interactions.

Its subcellular location is the cell membrane. It localises to the cytoplasm. It is found in the nucleus. In terms of biological role, required for the assembly and/or stability of the 40S ribosomal subunit. Required for the processing of the 20S rRNA-precursor to mature 18S rRNA in a late step of the maturation of 40S ribosomal subunits. Also functions as a cell surface receptor for laminin. Plays a role in cell adhesion to the basement membrane and in the consequent activation of signaling transduction pathways. May play a role in cell fate determination and tissue morphogenesis. Also acts as a receptor for several other ligands, including the pathogenic prion protein, viruses, and bacteria. Acts as a PPP1R16B-dependent substrate of PPP1CA. The polypeptide is Small ribosomal subunit protein uS2 (Sus scrofa (Pig)).